We begin with the raw amino-acid sequence, 467 residues long: Cysteine--tRNA ligase (467 aa).

Cysteine 28 contacts Zn(2+). A 'HIGH' region motif is present at residues 30 to 40 (MTVYDHCHLGH). The Zn(2+) site is built by cysteine 209, histidine 234, and glutamate 238. The short motif at 266–270 (KMSKS) is the 'KMSKS' region element. Lysine 269 serves as a coordination point for ATP.

It belongs to the class-I aminoacyl-tRNA synthetase family. Monomer. The cofactor is Zn(2+).

It is found in the cytoplasm. It carries out the reaction tRNA(Cys) + L-cysteine + ATP = L-cysteinyl-tRNA(Cys) + AMP + diphosphate. The sequence is that of Cysteine--tRNA ligase from Nitrosomonas eutropha (strain DSM 101675 / C91 / Nm57).